The primary structure comprises 91 residues: Small ribosomal subunit protein uS19 (91 aa).

Belongs to the universal ribosomal protein uS19 family.

Protein S19 forms a complex with S13 that binds strongly to the 16S ribosomal RNA. The polypeptide is Small ribosomal subunit protein uS19 (Synechococcus sp. (strain CC9902)).